The chain runs to 108 residues: Large ribosomal subunit protein uL24 (108 aa).

The protein belongs to the universal ribosomal protein uL24 family. In terms of assembly, part of the 50S ribosomal subunit.

Functionally, one of two assembly initiator proteins, it binds directly to the 5'-end of the 23S rRNA, where it nucleates assembly of the 50S subunit. Its function is as follows. One of the proteins that surrounds the polypeptide exit tunnel on the outside of the subunit. The sequence is that of Large ribosomal subunit protein uL24 from Mycoplasma genitalium (strain ATCC 33530 / DSM 19775 / NCTC 10195 / G37) (Mycoplasmoides genitalium).